An 875-amino-acid polypeptide reads, in one-letter code: Peptidyl-glycine alpha-amidating monooxygenase B (875 aa).

A signal peptide spans methionine 1–arginine 39. Residues methionine 3–glutamine 394 form a peptidylglycine alpha-hydroxylating monooxygenase region. Residues serine 40 to glycine 763 are Intragranular-facing. 5 cysteine pairs are disulfide-bonded: cysteine 45/cysteine 184, cysteine 79/cysteine 124, cysteine 112/cysteine 129, cysteine 225/cysteine 332, and cysteine 291/cysteine 313. Histidine 105 and histidine 106 together coordinate Cu(2+). The Cu(2+) site is built by histidine 170, histidine 240, histidine 242, and methionine 312. Residues aspartate 395–valine 716 form a peptidyl-alpha-hydroxyglycine alpha-amidating lyase region. Arginine 430 contributes to the a protein binding site. N-linked (GlcNAc...) asparagine glycosylation is present at asparagine 465. 3 NHL repeats span residues serine 467–glutamate 508, leucine 516–asparagine 561, and glycine 569–lysine 613. Intrachain disulfides connect cysteine 530/cysteine 551 and cysteine 598/cysteine 609. A protein contacts are provided by tyrosine 550 and arginine 602. The N-linked (GlcNAc...) asparagine glycan is linked to asparagine 662. Residues glycine 666–serine 709 form an NHL 4 repeat. Positions histidine 735–serine 755 are disordered. Residue asparagine 743 is glycosylated (N-linked (GlcNAc...) asparagine). Residues asparagine 743 to serine 755 are compositionally biased toward polar residues. Residues valine 764 to isoleucine 787 form a helical membrane-spanning segment. The Cytoplasmic segment spans residues arginine 788–serine 875. The interval lysine 837–serine 875 is disordered. The span at glutamate 850–tyrosine 864 shows a compositional bias: acidic residues.

This sequence in the C-terminal section; belongs to the peptidyl-alpha-hydroxyglycine alpha-amidating lyase family. The protein in the N-terminal section; belongs to the copper type II ascorbate-dependent monooxygenase family. In terms of assembly, monomer. Requires Zn(2+) as cofactor. The cofactor is Cu(2+).

Its subcellular location is the cytoplasmic vesicle. It is found in the secretory vesicle membrane. It carries out the reaction a [peptide]-C-terminal glycine + 2 L-ascorbate + O2 = a [peptide]-C-terminal (2S)-2-hydroxyglycine + 2 monodehydro-L-ascorbate radical + H2O. The catalysed reaction is a [peptide]-C-terminal (2S)-2-hydroxyglycine = a [peptide]-C-terminal amide + glyoxylate. Functionally, bifunctional enzyme that catalyzes amidation of the C-terminus of proteins. Alpha-amidation is present at the C-terminus of many endocrine hormones and neuropeptides and is required for their activity. C-terminal amidation also takes place in response to protein fragmentation triggered by oxidative stress, promoting degradation of amidated protein fragments by the proteasome. Alpha-amidation involves two sequential reactions, both of which are catalyzed by separate catalytic domains of the enzyme. The first step, catalyzed by peptidyl alpha-hydroxylating monooxygenase (PHM) domain, is the copper-, ascorbate-, and O2- dependent stereospecific hydroxylation (with S stereochemistry) at the alpha-carbon (C-alpha) of the C-terminal glycine of the peptidylglycine substrate. The second step, catalyzed by the peptidylglycine amidoglycolate lyase (PAL) domain, is the zinc-dependent cleavage of the N-C-alpha bond, producing the alpha-amidated peptide and glyoxylate. The chain is Peptidyl-glycine alpha-amidating monooxygenase B (pam-b) from Xenopus laevis (African clawed frog).